A 208-amino-acid polypeptide reads, in one-letter code: MKGFKIPEATISRLSVYSRYLENLYRKGITTVSSADIAQGVGVTSAQVRKDLAYFGEFGTRGVGYNVKELLDHTLKILGLNNTWNMVVVGAGNLGSALCAYRGFRERGFYIVGVFDNDLTKIGKKINEYEVLPIDKLEEVVRENNVEIGIIAVPAAYAQDVATRLVKAGVKGILNFAPTVLNVPDKVIVRSVDLTVNLEVLTFNIRRD.

Positions 16–55 (VYSRYLENLYRKGITTVSSADIAQGVGVTSAQVRKDLAYF) form a DNA-binding region, H-T-H motif. 90–95 (GAGNLG) is a binding site for NAD(+).

It belongs to the transcriptional regulatory Rex family. Homodimer.

The protein resides in the cytoplasm. Its function is as follows. Modulates transcription in response to changes in cellular NADH/NAD(+) redox state. In Carboxydothermus hydrogenoformans (strain ATCC BAA-161 / DSM 6008 / Z-2901), this protein is Redox-sensing transcriptional repressor Rex.